A 410-amino-acid polypeptide reads, in one-letter code: Aminopeptidase AmpS (410 aa).

A divalent metal cation-binding residues include E250, E316, E340, H345, H378, and D380.

It belongs to the peptidase M29 family. It depends on Co(2+) as a cofactor. Requires Zn(2+) as cofactor. Mg(2+) is required as a cofactor.

In terms of biological role, metal-dependent exopeptidase. The sequence is that of Aminopeptidase AmpS (ampS) from Bacillus subtilis (strain 168).